The following is a 249-amino-acid chain: 5'-nucleotidase SurE (249 aa).

A divalent metal cation-binding residues include aspartate 8, aspartate 9, serine 39, and asparagine 91.

Belongs to the SurE nucleotidase family. A divalent metal cation serves as cofactor.

It localises to the cytoplasm. It carries out the reaction a ribonucleoside 5'-phosphate + H2O = a ribonucleoside + phosphate. In terms of biological role, nucleotidase that shows phosphatase activity on nucleoside 5'-monophosphates. The chain is 5'-nucleotidase SurE from Pseudomonas savastanoi pv. phaseolicola (strain 1448A / Race 6) (Pseudomonas syringae pv. phaseolicola (strain 1448A / Race 6)).